We begin with the raw amino-acid sequence, 336 residues long: Holliday junction branch migration complex subunit RuvB (336 aa).

The tract at residues 1-182 (MKERIVNLET…FGMSFRMQFY (182 aa)) is large ATPase domain (RuvB-L). Residues Leu21, Arg22, Gly63, Lys66, Thr67, Ser68, 129-131 (EDF), Arg172, Tyr182, and Arg219 contribute to the ATP site. Thr67 lines the Mg(2+) pocket. The interval 183 to 253 (SPSELALIIK…ITLHALNELG (71 aa)) is small ATPAse domain (RuvB-S). Positions 256–336 (ELGFDEADLA…IPTLKSQSLF (81 aa)) are head domain (RuvB-H). DNA-binding residues include Arg310 and Arg315.

The protein belongs to the RuvB family. In terms of assembly, homohexamer. Forms an RuvA(8)-RuvB(12)-Holliday junction (HJ) complex. HJ DNA is sandwiched between 2 RuvA tetramers; dsDNA enters through RuvA and exits via RuvB. An RuvB hexamer assembles on each DNA strand where it exits the tetramer. Each RuvB hexamer is contacted by two RuvA subunits (via domain III) on 2 adjacent RuvB subunits; this complex drives branch migration. In the full resolvosome a probable DNA-RuvA(4)-RuvB(12)-RuvC(2) complex forms which resolves the HJ.

It localises to the cytoplasm. It catalyses the reaction ATP + H2O = ADP + phosphate + H(+). Its function is as follows. The RuvA-RuvB-RuvC complex processes Holliday junction (HJ) DNA during genetic recombination and DNA repair, while the RuvA-RuvB complex plays an important role in the rescue of blocked DNA replication forks via replication fork reversal (RFR). RuvA specifically binds to HJ cruciform DNA, conferring on it an open structure. The RuvB hexamer acts as an ATP-dependent pump, pulling dsDNA into and through the RuvAB complex. RuvB forms 2 homohexamers on either side of HJ DNA bound by 1 or 2 RuvA tetramers; 4 subunits per hexamer contact DNA at a time. Coordinated motions by a converter formed by DNA-disengaged RuvB subunits stimulates ATP hydrolysis and nucleotide exchange. Immobilization of the converter enables RuvB to convert the ATP-contained energy into a lever motion, pulling 2 nucleotides of DNA out of the RuvA tetramer per ATP hydrolyzed, thus driving DNA branch migration. The RuvB motors rotate together with the DNA substrate, which together with the progressing nucleotide cycle form the mechanistic basis for DNA recombination by continuous HJ branch migration. Branch migration allows RuvC to scan DNA until it finds its consensus sequence, where it cleaves and resolves cruciform DNA. This Helicobacter acinonychis (strain Sheeba) protein is Holliday junction branch migration complex subunit RuvB.